Here is a 199-residue protein sequence, read N- to C-terminus: Ribonuclease P protein component 3 (199 aa).

Belongs to the eukaryotic/archaeal RNase P protein component 3 family. In terms of assembly, consists of a catalytic RNA component and at least 4-5 protein subunits.

It localises to the cytoplasm. The catalysed reaction is Endonucleolytic cleavage of RNA, removing 5'-extranucleotides from tRNA precursor.. Part of ribonuclease P, a protein complex that generates mature tRNA molecules by cleaving their 5'-ends. This chain is Ribonuclease P protein component 3, found in Archaeoglobus fulgidus (strain ATCC 49558 / DSM 4304 / JCM 9628 / NBRC 100126 / VC-16).